We begin with the raw amino-acid sequence, 304 residues long: MARTHDDKWDLASSVGATATMVAAGRAMASRDPRGLIDDPFAEPLVRAVGVDFFIKMMDGEFDLSVLQNVSSAKAQAMVDGMAVRTKYFDDYFGDAIKSGIRQAVILASGLDARAYRLPWPADTVVYELDQPQVIEFKTNVLADLGAEPRATRRAIPIDLRGDWPVALRAAGLDTTAPTAWLAEGLLIYLPPEAQDRLFDNITALSAPGSTVATEFVPGIVDFDVDRARQMSGPFRDHGLDIDMSSLVYTGARNHVVDYLRAKGWDAEGVTRSELFERNGMAVPAPSDDDPLGEIIFISAALTG.

S-adenosyl-L-methionine-binding positions include aspartate 130 and 159 to 160 (DL).

This sequence belongs to the UPF0677 family.

Exhibits S-adenosyl-L-methionine-dependent methyltransferase activity. In Mycobacterium marinum (strain ATCC BAA-535 / M), this protein is Putative S-adenosyl-L-methionine-dependent methyltransferase MMAR_1057.